The primary structure comprises 257 residues: Beta-fibrinogenase mucrofibrase-5 (257 aa).

A signal peptide spans 1-18 (MVLIRVLANLLILQLSYA). Residues 19–24 (QKSSEL) constitute a propeptide that is removed on maturation. The 224-residue stretch at 25-248 (IIGGDECNIN…HLDWIKGIIA (224 aa)) folds into the Peptidase S1 domain. 6 cysteine pairs are disulfide-bonded: C31–C162, C49–C65, C97–C255, C141–C209, C173–C188, and C199–C224. Catalysis depends on H64, which acts as the Charge relay system. N-linked (GlcNAc...) asparagine glycosylation occurs at N102. Residue D109 is the Charge relay system of the active site. The active-site Charge relay system is the S203.

Belongs to the peptidase S1 family. Snake venom subfamily. In terms of assembly, monomer. As to expression, expressed by the venom gland.

It localises to the secreted. Its function is as follows. Snake venom serine protease with strong beta-fibrinogenolytic activities, angiotensin I (AGT)-degrading activities and strong kallikrein-like activities in vitro, releasing bradykinin from kininogen (KNG1). Intravenous injection mildly lowers blood pressure in experimental rats, which may be explained by the action on angiotensin I and kininogen. Exhibits amidase activity against N-benzoyl-Pro-Phe-Arg-p-nitroanilide in vitro. The protein is Beta-fibrinogenase mucrofibrase-5 of Protobothrops mucrosquamatus (Taiwan habu).